A 459-amino-acid polypeptide reads, in one-letter code: Cysteine--tRNA ligase (459 aa).

Residue cysteine 28 coordinates Zn(2+). A 'HIGH' region motif is present at residues 30-40 (MTVYDFCHLGH). Positions 209, 234, and 238 each coordinate Zn(2+). Positions 266–270 (KMAKS) match the 'KMSKS' region motif. Lysine 269 lines the ATP pocket. A disordered region spans residues 440–459 (QARGIELEDTPEGTKWRRTR).

Belongs to the class-I aminoacyl-tRNA synthetase family. As to quaternary structure, monomer. The cofactor is Zn(2+).

The protein resides in the cytoplasm. The catalysed reaction is tRNA(Cys) + L-cysteine + ATP = L-cysteinyl-tRNA(Cys) + AMP + diphosphate. In Halorhodospira halophila (strain DSM 244 / SL1) (Ectothiorhodospira halophila (strain DSM 244 / SL1)), this protein is Cysteine--tRNA ligase.